A 425-amino-acid polypeptide reads, in one-letter code: MPTNPNSCEVCSSSSNSSCNHFGARTCKACAAFFRRTVSMKLDYQCIDQPDACRVHCDSRVICRFCRLKKCHDIGMKPLLVKSKNERKNYIRISKGLIRKRSVLGDNVKENSEEIQNDDDPQESDAEMENESTPGPSSEPSENVSAENQETVTKFLKLEASMCDRRRLLYAETPISIVLESGKEWPYENAPLKMFDYKLSQGMSKHDFVMIMDYARGMPGFDEMNYADSVFCYRLVCAVDFVINSAYYTYKRGIEHNELVLSDGTFIPMVPTPLTGYEENANLLFQSQDDLMKFRTLMPLILHQWETCVPFAQLAPSHEEFCLLKAICVWHVSYYRLSEDGRRIAIAQRNRLIRALHHVCHLDSDDVGERFGNVMMALNYIMVNIRHVVSSFVMISFFGIINVDKSMISLTSFWNKSDTSTAPSL.

Residues 5–83 constitute a DNA-binding region (nuclear receptor); the sequence is PNSCEVCSSS…IGMKPLLVKS (79 aa). 2 NR C4-type zinc fingers span residues 11–30 and 46–71; these read CSSS…CKAC and CIDQ…LKKC. The disordered stretch occupies residues 108 to 148; it reads VKENSEEIQNDDDPQESDAEMENESTPGPSSEPSENVSAEN. Acidic residues predominate over residues 113–130; the sequence is EEIQNDDDPQESDAEMEN. Over residues 131–142 the composition is skewed to low complexity; that stretch reads ESTPGPSSEPSE. One can recognise an NR LBD domain in the interval 147–414; sequence ENQETVTKFL…KSMISLTSFW (268 aa).

Belongs to the nuclear hormone receptor family. May interact with nuclear hormone receptor nhr-49.

It localises to the nucleus. Its function is as follows. Orphan nuclear receptor. Involved in regulating fatty acid desaturase genes, acting in concert with nuclear hormone receptor nhr-49. This chain is Nuclear hormone receptor family member nhr-13 (nhr-13), found in Caenorhabditis elegans.